Reading from the N-terminus, the 416-residue chain is UDP-N-acetylglucosamine 1-carboxyvinyltransferase (416 aa).

22-23 (KN) lines the phosphoenolpyruvate pocket. UDP-N-acetyl-alpha-D-glucosamine is bound at residue Arg91. Residue Cys115 is the Proton donor of the active site. Cys115 bears the 2-(S-cysteinyl)pyruvic acid O-phosphothioketal mark. Residues 120–124 (RPIDL), Asp303, and Ile325 each bind UDP-N-acetyl-alpha-D-glucosamine.

Belongs to the EPSP synthase family. MurA subfamily.

The protein resides in the cytoplasm. The enzyme catalyses phosphoenolpyruvate + UDP-N-acetyl-alpha-D-glucosamine = UDP-N-acetyl-3-O-(1-carboxyvinyl)-alpha-D-glucosamine + phosphate. It functions in the pathway cell wall biogenesis; peptidoglycan biosynthesis. Its function is as follows. Cell wall formation. Adds enolpyruvyl to UDP-N-acetylglucosamine. The protein is UDP-N-acetylglucosamine 1-carboxyvinyltransferase of Lawsonia intracellularis (strain PHE/MN1-00).